The primary structure comprises 410 residues: Arginine deiminase (410 aa).

C400 functions as the Amidino-cysteine intermediate in the catalytic mechanism.

Belongs to the arginine deiminase family.

The protein resides in the cytoplasm. The catalysed reaction is L-arginine + H2O = L-citrulline + NH4(+). It functions in the pathway amino-acid degradation; L-arginine degradation via ADI pathway; carbamoyl phosphate from L-arginine: step 1/2. The protein is Arginine deiminase of Lactococcus lactis subsp. cremoris (strain MG1363).